Consider the following 172-residue polypeptide: MLFMMAAIALAVLLFMYVAVALRDHHPFLNRVQALLRDFDNTLLYGTHVRIYDLSTPARTERLFIIAPENVVLYNFDKTLYYYLDSANVFCPNEYTVAKFTGATIRTVNDTGVYSTACTVVGSLTLIEHFVGLKNNSPDHTLVLDVAEQIQFTIMDVINYLIYNGYVDIAAG.

It belongs to the baculoviridae 19 kDa protein family.

This is an uncharacterized protein from Orgyia pseudotsugata multicapsid polyhedrosis virus (OpMNPV).